The following is a 438-amino-acid chain: Transcriptional regulator Mb0495 (438 aa).

A compositionally biased stretch (polar residues) spans 1–12 (MYSTNRTSQSLS). Positions 1–22 (MYSTNRTSQSLSRKPGRKHQLR) are disordered. Positions 52-73 (VGRDVIAGSTSLSIATVNRQVI) form a DNA-binding region, H-T-H motif.

The protein belongs to the ROK (NagC/XylR) family.

Its function is as follows. Positively regulates the expression of PE13 and PPE18. The chain is Transcriptional regulator Mb0495 from Mycobacterium bovis (strain ATCC BAA-935 / AF2122/97).